Here is a 636-residue protein sequence, read N- to C-terminus: Polyglycine hydrolase (636 aa).

An N-terminal signal peptide occupies residues 1 to 22; sequence MHSLSLRRLLTSVLSLCSCSSA. 2 N-linked (GlcNAc...) asparagine glycosylation sites follow: Asn-30 and Asn-151. Residues Cys-141 and Cys-175 are joined by a disulfide bond. Ser-363 is an active-site residue. Residues Asn-383 and Asn-481 are each glycosylated (N-linked (GlcNAc...) asparagine). The segment at 512–540 is disordered; it reads TEDRIVQESKNTGQDPVHPQSAKLVPGPH.

This sequence belongs to the peptidase S12 family.

It is found in the secreted. The enzyme catalyses a glycyl-glycyl-[protein] + H2O = N-terminal glycyl-[protein] + [protein]-C-terminal glycine. In terms of biological role, serine-type endopeptidase that cleaves Gly-Gly bonds in the polyglycine linker of host plant class IV chitinases to disrupt their chitin-binding, and thereby plays a role in lowering the defense responses of the host to the fungus. Degrades Z.mays Endochitinase A (CHIA) in vitro, although corn is not its host species. In Fusarium vanettenii (strain ATCC MYA-4622 / CBS 123669 / FGSC 9596 / NRRL 45880 / 77-13-4) (Fusarium solani subsp. pisi), this protein is Polyglycine hydrolase.